Here is a 559-residue protein sequence, read N- to C-terminus: uncharacterized protein (559 aa).

Transmembrane regions (helical) follow at residues 103-123 (LAAL…NGLF), 139-159 (FGYY…LFYY), 192-212 (AGIT…SFPF), 223-243 (FFLI…IFLL), 263-283 (WSWV…TLAV), 302-322 (MLIL…SGVA), 348-368 (AAAF…NISD), 387-407 (IRRA…PWKI), 413-434 (AFLA…IFVA), 466-486 (ALIA…MSIN), and 501-521 (IGYF…NLVF).

This sequence belongs to the purine-cytosine permease (2.A.39) family.

It localises to the golgi apparatus membrane. This is an uncharacterized protein from Schizosaccharomyces pombe (strain 972 / ATCC 24843) (Fission yeast).